Here is a 163-residue protein sequence, read N- to C-terminus: MEMLQGLLLCLLLSTGGAWASKEPLRPPCRPTNVILAVEKEGCPVCVPFNTTICAGYCSSMVRVMQTLPPLPQTVCNYHELRFTSVRLPGCRRGVDPVVYMPMAVSCRCALCRRSYSDCGSFRNESLGCDYATSQDSSSNVPPSNLTSPSQLLEPAVTPLVPQ.

The N-terminal stretch at 1 to 20 is a signal peptide; it reads MEMLQGLLLCLLLSTGGAWA. Cystine bridges form between Cys-29–Cys-76, Cys-43–Cys-91, Cys-46–Cys-129, Cys-54–Cys-107, Cys-58–Cys-109, and Cys-112–Cys-119. Residue Asn-50 is glycosylated (N-linked (GlcNAc...) asparagine). A glycan (N-linked (GlcNAc...) asparagine) is linked at Asn-124. Over residues 135 to 151 the composition is skewed to polar residues; it reads QDSSSNVPPSNLTSPSQ. The tract at residues 135-163 is disordered; it reads QDSSSNVPPSNLTSPSQLLEPAVTPLVPQ. The O-linked (GalNAc...) serine glycan is linked to Ser-139. Asn-145 carries an N-linked (GlcNAc...) asparagine glycan. O-linked (GalNAc...) serine glycosylation is present at Ser-150.

The protein belongs to the glycoprotein hormones subunit beta family. Heterodimer of a common alpha chain and a unique beta chain which confers biological specificity to thyrotropin, lutropin, follitropin and gonadotropin.

The protein resides in the secreted. In terms of biological role, stimulates the ovaries to synthesize the steroids that are essential for the maintenance of pregnancy. In Saimiri boliviensis boliviensis (Bolivian squirrel monkey), this protein is Choriogonadotropin subunit beta (CGB).